The chain runs to 538 residues: Putative cysteine ligase BshC (538 aa).

Residues 460-484 (KINEQIELLERMLKRNVEKKHEVEL) are a coiled coil.

This sequence belongs to the BshC family.

In terms of biological role, involved in bacillithiol (BSH) biosynthesis. May catalyze the last step of the pathway, the addition of cysteine to glucosamine malate (GlcN-Mal) to generate BSH. In Bacillus cereus (strain ZK / E33L), this protein is Putative cysteine ligase BshC.